The chain runs to 460 residues: Probable glucan endo-1,3-beta-glucosidase eglC (460 aa).

The first 18 residues, 1 to 18 (MQLAQLAAFAMTLATSEA), serve as a signal peptide directing secretion. Catalysis depends on E128, which acts as the Proton donor. N183 is a glycosylation site (N-linked (GlcNAc...) asparagine). E239 functions as the Nucleophile in the catalytic mechanism. N312, N367, and N373 each carry an N-linked (GlcNAc...) asparagine glycan. The segment at 379–437 (RPSGSASARPSAGAISSGSGSSSSGSGSSGSTGTSATSGQSSSSGSSAAAGSSSPAAFS) is disordered. Residues 380–437 (PSGSASARPSAGAISSGSGSSSSGSGSSGSTGTSATSGQSSSSGSSAAAGSSSPAAFS) show a composition bias toward low complexity. The GPI-anchor amidated serine moiety is linked to residue S430. A propeptide spans 431-460 (SSPAAFSGASTLSGSLFGAVVAVFMTLAAL) (removed in mature form).

Belongs to the glycosyl hydrolase 17 family. The GPI-anchor is attached to the protein in the endoplasmic reticulum and serves to target the protein to the cell surface. There, the glucosamine-inositol phospholipid moiety is cleaved off and the GPI-modified mannoprotein is covalently attached via its lipidless GPI glycan remnant to the 1,6-beta-glucan of the outer cell wall layer.

Its subcellular location is the cell membrane. It is found in the secreted. It localises to the cell wall. It carries out the reaction Hydrolysis of (1-&gt;3)-beta-D-glucosidic linkages in (1-&gt;3)-beta-D-glucans.. Glucanases play a role in cell expansion during growth, in cell-cell fusion during mating, and in spore release during sporulation. This enzyme may be involved in beta-glucan degradation and also function biosynthetically as a transglycosylase. The chain is Probable glucan endo-1,3-beta-glucosidase eglC (eglC) from Aspergillus niger (strain ATCC MYA-4892 / CBS 513.88 / FGSC A1513).